Reading from the N-terminus, the 382-residue chain is 3-dehydroquinate synthase (382 aa).

Residues 81–86 (EGEGSK), 115–119 (GVVGD), 139–140 (TS), Lys-152, and Lys-161 each bind NAD(+). Zn(2+) contacts are provided by Glu-194, His-256, and His-274.

Belongs to the sugar phosphate cyclases superfamily. Dehydroquinate synthase family. Co(2+) is required as a cofactor. Zn(2+) serves as cofactor. Requires NAD(+) as cofactor.

It is found in the cytoplasm. It catalyses the reaction 7-phospho-2-dehydro-3-deoxy-D-arabino-heptonate = 3-dehydroquinate + phosphate. It functions in the pathway metabolic intermediate biosynthesis; chorismate biosynthesis; chorismate from D-erythrose 4-phosphate and phosphoenolpyruvate: step 2/7. Catalyzes the conversion of 3-deoxy-D-arabino-heptulosonate 7-phosphate (DAHP) to dehydroquinate (DHQ). In Bradyrhizobium sp. (strain BTAi1 / ATCC BAA-1182), this protein is 3-dehydroquinate synthase.